A 331-amino-acid polypeptide reads, in one-letter code: Cytosolic arginine sensor for mTORC1 subunit 1 (331 aa).

The residue at position 14 (Ser-14) is a Phosphoserine. The ACT 1 domain occupies 72 to 139; sequence AEATWLVMNV…SVVIHTLARE (68 aa). 110–111 serves as a coordination point for L-arginine; the sequence is SV. Residues 155-174 are disordered; the sequence is GDDSSNGFPQAQHGPSPTVH. Residues 156–174 are compositionally biased toward polar residues; sequence DDSSNGFPQAQHGPSPTVH. Residues 262 to 322 form the ACT 2 domain; it reads WRMVRIGGQP…SCVIDILQRR (61 aa). L-arginine is bound by residues Gly-273, 279 to 280, and 299 to 303; these read IV and TFNFD.

Belongs to the GATS family. In terms of assembly, forms homodimers and heterodimers with CASTOR2. Interacts with the GATOR2 complex which is composed of MIOS, SEC13, SEH1L, WDR24 and WDR59; the interaction is negatively regulated by arginine. Interacts with TM4SF5; the interaction is positively regulated by leucine and is negatively regulated by arginine. Post-translationally, phosphorylation at Ser-14 by AKT1, promoting the interaction between CASTOR1 and RNF167. In terms of processing, ubiquitinated by RNF167 via 'Lys-29'-polyubiquitination, leading to its degradation, releasing the GATOR2 complex. Ubiquitination by RNF167 is promoted by phosphorylation at Ser-14 by AKT1.

It is found in the cytoplasm. Its subcellular location is the cytosol. In terms of biological role, functions as an intracellular arginine sensor within the amino acid-sensing branch of the TORC1 signaling pathway. As a homodimer or a heterodimer with CASTOR2, binds and inhibits the GATOR subcomplex GATOR2 and thereby mTORC1. Binding of arginine to CASTOR1 allosterically disrupts the interaction of CASTOR1-containing dimers with GATOR2 which can in turn activate mTORC1 and the TORC1 signaling pathway. The protein is Cytosolic arginine sensor for mTORC1 subunit 1 of Rattus norvegicus (Rat).